The sequence spans 305 residues: Putative F-box protein PP2-B8 (305 aa).

One can recognise an F-box domain in the interval 33-79 (VAELDDLPEECVSIIVSFTSPQDACVLASVSKTFASAVKSDIVWEKF).

The protein is Putative F-box protein PP2-B8 (PP2B8) of Arabidopsis thaliana (Mouse-ear cress).